We begin with the raw amino-acid sequence, 509 residues long: Tyrosine-protein kinase Lck (509 aa).

Gly2 carries the N-myristoyl glycine lipid modification. The tract at residues 2 to 72 is interactions with CD4 and CD8; it reads GCGCSSHPED…DNLVIALHSY (71 aa). 2 S-palmitoyl cysteine lipidation sites follow: Cys3 and Cys5. An SH3 domain is found at 61–121; it reads LQDNLVIALH…PFNFVAKANS (61 aa). Lys99 participates in a covalent cross-link: Glycyl lysine isopeptide (Lys-Gly) (interchain with G-Cter in ubiquitin). Ser102 bears the Phosphoserine mark. Residues 127-224 form the SH2 domain; the sequence is WFFKNLSRKD…GLCTRLSRPC (98 aa). Residues 154–242 form an interaction with PTPRH region; the sequence is RESESTAGSF…WWEDEWEVPR (89 aa). Position 159 is a phosphothreonine (Thr159). Ser162 is subject to Phosphoserine. Position 192 is a phosphotyrosine (Tyr192). Phosphoserine is present on Ser194. Residues 245–498 enclose the Protein kinase domain; sequence LKLVERLGAG…YLRSVLEDFF (254 aa). ATP contacts are provided by residues 251 to 259 and Lys273; that span reads LGAGQFGEV. Residue Lys276 forms a Glycyl lysine isopeptide (Lys-Gly) (interchain with G-Cter in ubiquitin) linkage. The active-site Proton acceptor is Asp364. Tyr394 is subject to Phosphotyrosine; by autocatalysis. A Phosphotyrosine; by CSK modification is found at Tyr505.

The protein belongs to the protein kinase superfamily. Tyr protein kinase family. SRC subfamily. As to quaternary structure, binds to the cytoplasmic domain of cell surface receptors, such as AXL, CD2, CD4, CD5, CD8, CD44, CD45 and CD122. Also binds to effector molecules, such as PI4K, VAV1, RASA1, FYB1 and to other protein kinases including CDK1, RAF1, ZAP70 and SYK. Binds to phosphatidylinositol 3'-kinase (PI3K) from T-lymphocytes through its SH3 domain and to the tyrosine phosphorylated form of KHDRBS1/p70 through its SH2 domain. This interaction inhibits its tyrosine-kinase activity. Interacts with SQSTM1. Interacts with phosphorylated LIME1. Interacts with CBLB and PTPRH. Interacts with RUNX3. Forms a signaling complex with EPHA1, PTK2B and PI3-KINASE; upon activation by EFNA1 which may regulate T-lymphocyte migration. Associates with ZAP70 and RHOH; these interactions allow LCK-mediated RHOH and CD3 subunit phosphorylation in the presence of functional ZAP70. Interacts with UNC119; this interaction plays a crucial role in activation of LCK. Interacts with CEACAM1 (via cytoplasmic domain); mediates CEACAM1 phosphorylation resulting in PTPN6 recruitment that dephosphorylates TCR stimulation-induced CD247 and ZAP70. Interacts with CD160. Interacts with CD48. In terms of assembly, (Microbial infection) Interacts with herpes simplex virus 1 UL46; this interaction activates LCK. (Microbial infection) Interacts with HIV-1 Nef through its SH3 domain. Post-translationally, autophosphorylated on Tyr-394, increasing enzymatic activity, this site is dephosphorylated by PTN22. Phosphorylated on Tyr-505 by CSK, decreasing activity. Dephosphorylated by PTPRC/CD45. Dephosphorylation at Tyr-394 by PTPN2 negatively regulates T-cell receptor signaling. Dephosphorylation at Tyr-394 by DUSP22 negatively regulates T-cell receptor signaling. In terms of processing, myristoylation is required prior to palmitoylation. Palmitoylation regulates association with the plasma membrane and could be mediated by ZDHHC2. Post-translationally, 'Lys-63'-linked ubiquitinated at Lys-99 and Lys-276 by UBR2; this modification is required for autophosphorylation at Tyr-394. Expressed specifically in lymphoid cells.

Its subcellular location is the cell membrane. The protein localises to the cytoplasm. The protein resides in the cytosol. It carries out the reaction L-tyrosyl-[protein] + ATP = O-phospho-L-tyrosyl-[protein] + ADP + H(+). The relative activities of the inhibitory tyrosine-protein kinase CSK and the activating tyrosine-protein phosphatase PTPRC/CD45 determine the level of LCK activity. These interactions allow rapid and efficient activation of LCK in response to TCR stimulation. Functionally, non-receptor tyrosine-protein kinase that plays an essential role in the selection and maturation of developing T-cells in the thymus and in the function of mature T-cells. Plays a key role in T-cell antigen receptor (TCR)-linked signal transduction pathways. Constitutively associated with the cytoplasmic portions of the CD4 and CD8 surface receptors. Association of the TCR with a peptide antigen-bound MHC complex facilitates the interaction of CD4 and CD8 with MHC class II and class I molecules, respectively, thereby recruiting the associated LCK protein to the vicinity of the TCR/CD3 complex. LCK then phosphorylates tyrosine residues within the immunoreceptor tyrosine-based activation motifs (ITAM) of the cytoplasmic tails of the TCR-gamma chains and CD3 subunits, initiating the TCR/CD3 signaling pathway. Once stimulated, the TCR recruits the tyrosine kinase ZAP70, that becomes phosphorylated and activated by LCK. Following this, a large number of signaling molecules are recruited, ultimately leading to lymphokine production. LCK also contributes to signaling by other receptor molecules. Associates directly with the cytoplasmic tail of CD2, which leads to hyperphosphorylation and activation of LCK. Also plays a role in the IL2 receptor-linked signaling pathway that controls the T-cell proliferative response. Binding of IL2 to its receptor results in increased activity of LCK. Is expressed at all stages of thymocyte development and is required for the regulation of maturation events that are governed by both pre-TCR and mature alpha beta TCR. Phosphorylates other substrates including RUNX3, PTK2B/PYK2, the microtubule-associated protein MAPT, RHOH or TYROBP. Interacts with FYB2. The protein is Tyrosine-protein kinase Lck (LCK) of Homo sapiens (Human).